A 514-amino-acid chain; its full sequence is UDP-N-acetylmuramate--L-alanine ligase (514 aa).

127–133 (GTHGKTT) provides a ligand contact to ATP. The span at 495 to 505 (IGGTIPDIPGG) shows a compositional bias: low complexity. The tract at residues 495-514 (IGGTIPDIPGGSTPDASAAG) is disordered.

The protein belongs to the MurCDEF family.

Its subcellular location is the cytoplasm. It catalyses the reaction UDP-N-acetyl-alpha-D-muramate + L-alanine + ATP = UDP-N-acetyl-alpha-D-muramoyl-L-alanine + ADP + phosphate + H(+). Its pathway is cell wall biogenesis; peptidoglycan biosynthesis. Cell wall formation. The chain is UDP-N-acetylmuramate--L-alanine ligase from Salinispora tropica (strain ATCC BAA-916 / DSM 44818 / JCM 13857 / NBRC 105044 / CNB-440).